The sequence spans 458 residues: 5-hydroxytryptamine receptor 2C (458 aa).

An N-terminal signal peptide occupies residues Met1–Ala32. Residues Ile33 to Trp55 are Extracellular-facing. Asn39 carries N-linked (GlcNAc...) asparagine glycosylation. A helical membrane pass occupies residues Pro56 to Met80. The Cytoplasmic portion of the chain corresponds to Glu81–Asn86. Residues Ala87 to Leu111 traverse the membrane as a helical segment. Residues Leu112–Pro128 lie on the Extracellular side of the membrane. Cysteines 127 and 207 form a disulfide. A helical membrane pass occupies residues Val129–Asp151. Thr139 serves as a coordination point for ergotamine. The short motif at Asp151–Tyr153 is the DRY motif; important for ligand-induced conformation changes element. Residues Arg152–Ser167 lie on the Cytoplasmic side of the membrane. A helical membrane pass occupies residues Arg168 to Ile189. Residues Pro190–Asn213 are Extracellular-facing. Asn204 is a glycosylation site (N-linked (GlcNAc...) asparagine). Leu209 contributes to the ergotamine binding site. Residues Phe214–Leu236 form a helical membrane-spanning segment. Over Thr237–Lys311 the chain is Cytoplasmic. Residues Glu274–Gln301 form a disordered region. The span at Arg287–Arg297 shows a compositional bias: basic residues. A helical transmembrane segment spans residues Val312 to Leu336. Cys337 and Cys341 form a disulfide bridge. Residues Cys337–Glu347 are Extracellular-facing. The helical transmembrane segment at Lys348–Leu370 threads the bilayer. The NPxxY motif; important for ligand-induced conformation changes and signaling motif lies at Asn364–Tyr368. At Phe371 to Val458 the chain is on the cytoplasmic side. The PDZ-binding motif lies at Ser456–Val458.

The protein belongs to the G-protein coupled receptor 1 family. Interacts with MPDZ. Interacts with ARRB2. Interacts with MPP3; this interaction stabilizes the receptor at the plasma membrane and prevents the desensitization of the HTR2C receptor-mediated calcium response. In terms of processing, N-glycosylated. As to expression, detected in brain.

The protein resides in the cell membrane. Its activity is regulated as follows. Inhibited by inverse agonist ritanserin. G-protein coupled receptor for 5-hydroxytryptamine (serotonin). Also functions as a receptor for various drugs and psychoactive substances, including ergot alkaloid derivatives, 1-2,5,-dimethoxy-4-iodophenyl-2-aminopropane (DOI) and lysergic acid diethylamide (LSD). Ligand binding causes a conformation change that triggers signaling via guanine nucleotide-binding proteins (G proteins) and modulates the activity of downstream effectors. HTR2C is coupled to G(q)/G(11) G alpha proteins and activates phospholipase C-beta, releasing diacylglycerol (DAG) and inositol 1,4,5-trisphosphate (IP3) second messengers that modulate the activity of phosphatidylinositol 3-kinase and promote the release of Ca(2+) ions from intracellular stores, respectively. Beta-arrestin family members inhibit signaling via G proteins and mediate activation of alternative signaling pathways. Regulates neuronal activity via the activation of short transient receptor potential calcium channels in the brain, and thereby modulates the activation of pro-opiomelanocortin neurons and the release of CRH that then regulates the release of corticosterone. Plays a role in the regulation of appetite and eating behavior, responses to anxiogenic stimuli and stress. Plays a role in insulin sensitivity and glucose homeostasis. The protein is 5-hydroxytryptamine receptor 2C of Homo sapiens (Human).